The following is a 766-amino-acid chain: Single-minded homolog 1 (766 aa).

The bHLH domain occupies 1–53; the sequence is MKEKSKNAARTRREKENSEFYELAKLLPLPSAITSQLDKASIIRLTTSYLKMR. 2 PAS domains span residues 77 to 147 and 218 to 288; these read GREL…QPYH and PPSA…LVKG. A PAC domain is found at 292–335; that stretch reads TKYYRFLAKHGGWVWVQSYATIVHNSRSSRPHCIVSVNYVLTDT. In terms of domain architecture, Single-minded C-terminal spans 336–766; the sequence is EYKGLQLSLD…GTSVIITNGS (431 aa). The segment covering 353–365 has biased composition (polar residues); the sequence is AFSYTSSSTPTMT. Disordered stretches follow at residues 353-431 and 528-563; these read AFSY…SQHD and WDED…EPSK. The Nuclear localization signal motif lies at 368 to 387; the sequence is RKGAKSRLSSSKSKSRTSPY. Over residues 373–385 the composition is skewed to low complexity; that stretch reads SRLSSSKSKSRTS. Basic and acidic residues predominate over residues 394 to 404; the sequence is HTERSESDHDS.

Efficient DNA binding requires dimerization with another bHLH protein. Heterodimer; forms a heterodimer with ARNT, ARNT2.

The protein resides in the nucleus. Transcriptional factor that may have pleiotropic effects during embryogenesis and in the adult. The sequence is that of Single-minded homolog 1 (SIM1) from Homo sapiens (Human).